The primary structure comprises 423 residues: LysM domain-containing GPI-anchored protein 3 (423 aa).

Residues 1-24 (MKNPEKPLLLFLILASSLASMATA) form the signal peptide. Intrachain disulfides connect Cys31–Cys97, Cys37–Cys160, Cys95–Cys158, and Cys97–Cys160. The LysM 1 domain occupies 107-154 (THYKTRTSDTLGSIADSVYGGLVSPEQIQVANSETDLSVLDVGTKLVI). N-linked (GlcNAc...) asparagine glycosylation occurs at Asn162. The region spanning 173–216 (LSYVVRGIDTMAGIAKRFSTSVTDLTNVNAMGAPDINPGDILAV) is the LysM 2 domain. Disulfide bonds link Cys221/Cys253 and Cys248/Cys276. N-linked (GlcNAc...) asparagine glycosylation is present at Asn238. Asn285 is a glycosylation site (N-linked (GlcNAc...) asparagine). Residue Gly394 is the site of GPI-anchor amidated glycine attachment. Residues 395–423 (GSISIASCPLSYYSFIALLIPIGSCFFVF) constitute a propeptide, removed in mature form.

As to quaternary structure, interacts with peptidoglycans.

The protein resides in the cell membrane. In terms of biological role, required as a cell surface receptor for peptidoglycan (PGN) elicitor signaling leading to innate immunity. Plays an essential role in detecting PGNs and restricting bacterial growth (of Pseudomonas syringae pv. tomato DC3000 for example). The chain is LysM domain-containing GPI-anchored protein 3 (LYM3) from Arabidopsis thaliana (Mouse-ear cress).